A 361-amino-acid chain; its full sequence is 4-oxalomesaconate tautomerase (361 aa).

The protein belongs to the PrpF family.

It catalyses the reaction (1E)-4-oxobut-1-ene-1,2,4-tricarboxylate = 4-carboxy-2-hydroxy-cis,cis-muconate. Functionally, catalyzes the tautomerization of the 4-oxalomesaconic acid keto (OMAketo) generated by GalA dioxygenase to 4-oxalomesaconic acid enol (OMAenol). Mediates the second step in gallate degradation pathway. In Pseudomonas putida (strain ATCC 47054 / DSM 6125 / CFBP 8728 / NCIMB 11950 / KT2440), this protein is 4-oxalomesaconate tautomerase (galD).